Consider the following 360-residue polypeptide: Putative F-box protein At3g47150 (360 aa).

Positions 6-56 (NTTQIYIPLDLQINILLRLPVKSLLRFRCVSKLWCSIITSHDFRNRHFNIT) constitute an F-box domain.

The protein is Putative F-box protein At3g47150 of Arabidopsis thaliana (Mouse-ear cress).